A 329-amino-acid polypeptide reads, in one-letter code: MTLSRAKHANRNHLPHLLAKVPEEHQEPIKNMCLKMMSHDAYGQPYDWSPRDFEMGAHLGRGKFGRVYLARERHSHYLVAMKVMFKEELRKGCVQRQVLREIEIQSRLKHPHILRLLTWFHDESRIYLALEIASEGELFKHLRGAPNHRFDEPRSAKYTYQVANALNYCHLNNVIHRDLKPENILLTSTDDLKLADFGWSAHTPNNKRRTLCGTLDYLPPEMVDGNSYDDSVDQWCLGILCYEFVVGCPPFESNSTESTYSKIRRMEISYPSHLSKGCKELIGGLLRKESKGRITLVDVMTHYWVKAGMAERELQLQKRERGKENTARN.

Over residues 1–14 (MTLSRAKHANRNHL) the composition is skewed to basic residues. The interval 1–21 (MTLSRAKHANRNHLPHLLAKV) is disordered. A Protein kinase domain is found at 53 to 305 (FEMGAHLGRG…LVDVMTHYWV (253 aa)). Residues 59–67 (LGRGKFGRV) and Lys-82 contribute to the ATP site. The active-site Proton acceptor is the Asp-178.

This sequence belongs to the protein kinase superfamily. Ser/Thr protein kinase family. Aurora subfamily. As to quaternary structure, interacts with Incenp and Cdc37. It depends on Mg(2+) as a cofactor.

Its subcellular location is the chromosome. It localises to the cytoplasm. It is found in the cytoskeleton. The protein resides in the midbody. It catalyses the reaction L-seryl-[protein] + ATP = O-phospho-L-seryl-[protein] + ADP + H(+). It carries out the reaction L-threonyl-[protein] + ATP = O-phospho-L-threonyl-[protein] + ADP + H(+). In terms of biological role, serine/threonine-protein kinase that mediates both meiotic and mitotic chromosome segregation. Required for histone H3 'Ser-10' phosphorylation. Phosphorylates mei-S332 within residues 124-126 and stabilizes its association with centromeres during meiosis. May regulate the function of the ESCRT-III complex core component shrb during abscission of germline cells in oogenesis. In Drosophila melanogaster (Fruit fly), this protein is Aurora kinase B.